We begin with the raw amino-acid sequence, 435 residues long: Methylenetetrahydrofolate--tRNA-(uracil-5-)-methyltransferase TrmFO (435 aa).

9–14 (GAGLAG) is a binding site for FAD.

Belongs to the MnmG family. TrmFO subfamily. The cofactor is FAD.

It is found in the cytoplasm. The enzyme catalyses uridine(54) in tRNA + (6R)-5,10-methylene-5,6,7,8-tetrahydrofolate + NADH + H(+) = 5-methyluridine(54) in tRNA + (6S)-5,6,7,8-tetrahydrofolate + NAD(+). The catalysed reaction is uridine(54) in tRNA + (6R)-5,10-methylene-5,6,7,8-tetrahydrofolate + NADPH + H(+) = 5-methyluridine(54) in tRNA + (6S)-5,6,7,8-tetrahydrofolate + NADP(+). In terms of biological role, catalyzes the folate-dependent formation of 5-methyl-uridine at position 54 (M-5-U54) in all tRNAs. The protein is Methylenetetrahydrofolate--tRNA-(uracil-5-)-methyltransferase TrmFO of Staphylococcus epidermidis (strain ATCC 35984 / DSM 28319 / BCRC 17069 / CCUG 31568 / BM 3577 / RP62A).